We begin with the raw amino-acid sequence, 741 residues long: Subtilisin-like protease SBT4.4 (741 aa).

Positions 1–24 (MAKGTTFIFLFSSLLVLSLSSVSA) are cleaved as a signal peptide. The propeptide at 25–112 (DKDDHGDQQV…VFPSRKLKLQ (88 aa)) is activation peptide. Residues 34 to 111 (VYIVYLGSLP…SVFPSRKLKL (78 aa)) enclose the Inhibitor I9 domain. A Peptidase S8 domain is found at 116 to 589 (SWNFMGLKEG…SGHVDPIDAI (474 aa)). Asp-144 serves as the catalytic Charge relay system. Residues Asn-175 and Asn-195 are each glycosylated (N-linked (GlcNAc...) asparagine). The active-site Charge relay system is His-204. Residues Asn-227 and Asn-357 are each glycosylated (N-linked (GlcNAc...) asparagine). The 87-residue stretch at 359-445 (TNYPLVYGKS…LSNDDYKSLV (87 aa)) folds into the PA domain. N-linked (GlcNAc...) asparagine glycosylation is present at Asn-449. The active-site Charge relay system is the Ser-528. N-linked (GlcNAc...) asparagine glycosylation is found at Asn-565, Asn-610, Asn-623, and Asn-654.

Belongs to the peptidase S8 family. Post-translationally, the C-terminal propeptide is autocleaved.

Its subcellular location is the secreted. The chain is Subtilisin-like protease SBT4.4 from Arabidopsis thaliana (Mouse-ear cress).